Here is a 387-residue protein sequence, read N- to C-terminus: LL-diaminopimelate aminotransferase (387 aa).

Residues Y14 and G39 each contribute to the substrate site. Residues Y68, 102 to 103, Y127, N177, Y208, and 236 to 238 contribute to the pyridoxal 5'-phosphate site; these read SK and SLS. The substrate site is built by K103, Y127, and N177. Residue K239 is modified to N6-(pyridoxal phosphate)lysine. R247 is a binding site for pyridoxal 5'-phosphate. R365 serves as a coordination point for substrate.

The protein belongs to the class-I pyridoxal-phosphate-dependent aminotransferase family. LL-diaminopimelate aminotransferase subfamily. In terms of assembly, homodimer. Pyridoxal 5'-phosphate serves as cofactor.

It catalyses the reaction (2S,6S)-2,6-diaminopimelate + 2-oxoglutarate = (S)-2,3,4,5-tetrahydrodipicolinate + L-glutamate + H2O + H(+). It participates in amino-acid biosynthesis; L-lysine biosynthesis via DAP pathway; LL-2,6-diaminopimelate from (S)-tetrahydrodipicolinate (aminotransferase route): step 1/1. Its function is as follows. Involved in the synthesis of meso-diaminopimelate (m-DAP or DL-DAP), required for both lysine and peptidoglycan biosynthesis. Catalyzes the direct conversion of tetrahydrodipicolinate to LL-diaminopimelate. The polypeptide is LL-diaminopimelate aminotransferase (Aquifex aeolicus (strain VF5)).